Here is a 133-residue protein sequence, read N- to C-terminus: Classical arabinogalactan protein 5 (133 aa).

The signal sequence occupies residues 1 to 21 (MASKSVVVFLFLALVASSVVA). The residue at position 22 (glutamine 22) is a Pyrrolidone carboxylic acid. The interval 23-110 (APGPAPTISP…QSPLSGSPNA (88 aa)) is disordered. The span at 25–37 (GPAPTISPLPATP) shows a compositional bias: pro residues. The segment covering 38–48 (TPSQSPRATAP) has biased composition (low complexity). Pro residues predominate over residues 49 to 81 (APSPSANPPPSAPTTAPPVSQPPTESPPAPPTS). Residue asparagine 109 is the site of GPI-anchor amidated asparagine attachment. Positions 110-133 (AAAVSRVSLVGTFAGVAVIAALLL) are cleaved as a propeptide — removed in mature form.

This sequence belongs to the classical AGP family. In terms of processing, O-glycosylated on the hydroxyproline residues. In terms of tissue distribution, expressed at a low level in flowers and siliques.

Its subcellular location is the cell membrane. Its function is as follows. Proteoglycan that seems to be implicated in diverse developmental roles such as differentiation, cell-cell recognition, embryogenesis and programmed cell death. The polypeptide is Classical arabinogalactan protein 5 (AGP5) (Arabidopsis thaliana (Mouse-ear cress)).